Reading from the N-terminus, the 84-residue chain is Magnetosome protein MamG (84 aa).

Topologically, residues 1–3 are cytoplasmic; that stretch reads MIK. The chain crosses the membrane as a helical span at residues 4 to 24; sequence GIAGVGGTALGVGGGVAAPPV. Residues 25-40 are Lumenal-facing; sequence SAAAVGSTLLAGKGVC. Residues 41 to 48 are LG repeat; the sequence is LGLGLGLG. A helical membrane pass occupies residues 41–61; sequence LGLGLGLGAWGPVLLGVAGLA. At 62-84 the chain is on the cytoplasmic side; that stretch reads CAASLCDYLKNRKAQAEASAEPA.

The protein belongs to the magnetosome MamG (TC 9.B.95) protein family.

The protein resides in the magnetosome membrane. Plays a role in regulating magnetite crystal size. This is Magnetosome protein MamG from Magnetospirillum gryphiswaldense (strain DSM 6361 / JCM 21280 / NBRC 15271 / MSR-1).